Consider the following 334-residue polypeptide: Holliday junction branch migration complex subunit RuvB (334 aa).

Residues 4–184 (ADRLIQPQLQ…FGIPLRLEFY (181 aa)) form a large ATPase domain (RuvB-L) region. ATP-binding positions include Arg-24, Gly-65, Lys-68, Thr-69, Thr-70, 131-133 (EDY), Arg-174, Tyr-184, and Arg-221. Thr-69 contributes to the Mg(2+) binding site. The interval 185 to 255 (NIKDLSTIVT…VADHALDLLD (71 aa)) is small ATPAse domain (RuvB-S). Positions 258–334 (NEGFDYMDRK…YQHFQLIKPE (77 aa)) are head domain (RuvB-H). Residues Arg-294, Arg-313, and Arg-318 each coordinate DNA.

It belongs to the RuvB family. Homohexamer. Forms an RuvA(8)-RuvB(12)-Holliday junction (HJ) complex. HJ DNA is sandwiched between 2 RuvA tetramers; dsDNA enters through RuvA and exits via RuvB. An RuvB hexamer assembles on each DNA strand where it exits the tetramer. Each RuvB hexamer is contacted by two RuvA subunits (via domain III) on 2 adjacent RuvB subunits; this complex drives branch migration. In the full resolvosome a probable DNA-RuvA(4)-RuvB(12)-RuvC(2) complex forms which resolves the HJ.

The protein resides in the cytoplasm. The enzyme catalyses ATP + H2O = ADP + phosphate + H(+). In terms of biological role, the RuvA-RuvB-RuvC complex processes Holliday junction (HJ) DNA during genetic recombination and DNA repair, while the RuvA-RuvB complex plays an important role in the rescue of blocked DNA replication forks via replication fork reversal (RFR). RuvA specifically binds to HJ cruciform DNA, conferring on it an open structure. The RuvB hexamer acts as an ATP-dependent pump, pulling dsDNA into and through the RuvAB complex. RuvB forms 2 homohexamers on either side of HJ DNA bound by 1 or 2 RuvA tetramers; 4 subunits per hexamer contact DNA at a time. Coordinated motions by a converter formed by DNA-disengaged RuvB subunits stimulates ATP hydrolysis and nucleotide exchange. Immobilization of the converter enables RuvB to convert the ATP-contained energy into a lever motion, pulling 2 nucleotides of DNA out of the RuvA tetramer per ATP hydrolyzed, thus driving DNA branch migration. The RuvB motors rotate together with the DNA substrate, which together with the progressing nucleotide cycle form the mechanistic basis for DNA recombination by continuous HJ branch migration. Branch migration allows RuvC to scan DNA until it finds its consensus sequence, where it cleaves and resolves cruciform DNA. The chain is Holliday junction branch migration complex subunit RuvB from Shewanella sp. (strain W3-18-1).